A 295-amino-acid chain; its full sequence is UDP-N-acetylenolpyruvoylglucosamine reductase (295 aa).

The 164-residue stretch at 26–189 (VGGQADILFK…IEAEFKGVSS (164 aa)) folds into the FAD-binding PCMH-type domain. Arg169 is an active-site residue. The active-site Proton donor is the Cys218. The active site involves Glu288.

It belongs to the MurB family. FAD is required as a cofactor.

It is found in the cytoplasm. The catalysed reaction is UDP-N-acetyl-alpha-D-muramate + NADP(+) = UDP-N-acetyl-3-O-(1-carboxyvinyl)-alpha-D-glucosamine + NADPH + H(+). It participates in cell wall biogenesis; peptidoglycan biosynthesis. Functionally, cell wall formation. This is UDP-N-acetylenolpyruvoylglucosamine reductase from Wolbachia sp. subsp. Brugia malayi (strain TRS).